A 330-amino-acid chain; its full sequence is Membrane progestin receptor gamma (330 aa).

At 1 to 51 (MLSLKLPRLFSIDQIPQVFHEQGILFGYRHPQSSATACILSLFQMTNETLN) the chain is on the cytoplasmic side. Residues 52-72 (IWTHLLPFWFFAWRFVTALYM) traverse the membrane as a helical segment. The Extracellular segment spans residues 73-80 (TDIKNDSY). The chain crosses the membrane as a helical span at residues 81-101 (SWPMLVYMCTSCVYPLVSSCA). Residues 102-113 (HTFSSMSKNARH) lie on the Cytoplasmic side of the membrane. Residues 114–134 (ICYFLDYGAVNLFSLGSAIAY) form a helical membrane-spanning segment. Residues 135–141 (SAYTFPD) are Extracellular-facing. Residues 142 to 162 (ALMCTTFHDYYVALAVLNTIL) traverse the membrane as a helical segment. Residues 163-186 (STGLSCYSRFLEIQKPRLCKVIRV) are Cytoplasmic-facing. A helical transmembrane segment spans residues 187–207 (LAFAYPYTWDSLPIFYRLFLF). At 208–253 (PGESAQNEATSYHQKHMIMTLLASFLYSAHLPERLAPGRFDYIGHS) the chain is on the extracellular side. The chain crosses the membrane as a helical span at residues 254 to 274 (HQLFHVCVILATHMQMEAILL). The Cytoplasmic segment spans residues 275-294 (DKTLRKEWLLATSKPFSFSQ). The chain crosses the membrane as a helical span at residues 295–315 (IAGAILLCIIFSLSNIIYFSA). The Extracellular portion of the chain corresponds to 316–330 (ALYRIPKPELHKKET).

The protein belongs to the ADIPOR family. As to expression, expressed in the brain, lung, kidney, colon, adrenal and lung.

It localises to the cell membrane. Plasma membrane progesterone (P4) receptor coupled to G proteins. Seems to act through a G(i) mediated pathway. May be involved in oocyte maturation. This chain is Membrane progestin receptor gamma, found in Homo sapiens (Human).